A 260-amino-acid chain; its full sequence is Type II methyltransferase M.CviBI (260 aa).

The S-adenosyl-L-methionine site is built by W7, K11, D54, and D177.

This sequence belongs to the N(4)/N(6)-methyltransferase family.

The catalysed reaction is a 2'-deoxyadenosine in DNA + S-adenosyl-L-methionine = an N(6)-methyl-2'-deoxyadenosine in DNA + S-adenosyl-L-homocysteine + H(+). In terms of biological role, a alpha subtype methylase, recognizes the double-stranded sequence 5'-GANTC-3', methylates A-2 on both strands, and protects the DNA from cleavage by the CviBI endonuclease. The chain is Type II methyltransferase M.CviBI from Paramecium bursaria Chlorella virus NC1A (PBCV-NC1A).